Consider the following 430-residue polypeptide: Asparagine--tRNA ligase (430 aa).

The protein belongs to the class-II aminoacyl-tRNA synthetase family. Homodimer.

Its subcellular location is the cytoplasm. The enzyme catalyses tRNA(Asn) + L-asparagine + ATP = L-asparaginyl-tRNA(Asn) + AMP + diphosphate + H(+). This is Asparagine--tRNA ligase from Staphylococcus aureus (strain MRSA252).